The following is a 209-amino-acid chain: Inducible T-cell costimulator (209 aa).

An N-terminal signal peptide occupies residues 1–19; the sequence is MKSDLRYFFLFCIQVEILA. The Extracellular portion of the chain corresponds to 20–141; sequence GEFNDSAASE…YESELCCQLK (122 aa). A glycan (N-linked (GlcNAc...) asparagine) is linked at asparagine 23. Residues 30–133 enclose the Ig-like V-type domain; the sequence is MFIFHNGGVQ…LSREYLNIYE (104 aa). Disulfide bonds link cysteine 42-cysteine 109 and cysteine 63-cysteine 83. The N-linked (GlcNAc...) asparagine glycan is linked to asparagine 89. Residues 142 to 162 form a helical membrane-spanning segment; sequence FWLPIGCAAFVTVCVFGCVLM.

Homodimer; disulfide-linked. Interacts with ICOSLG. Interacts with PIK3R1. Interacts with TBK1; this interaction is critical for the maturation of T follicular regulatory cells. N-glycosylated.

The protein localises to the cell membrane. In terms of biological role, stimulatory receptor expressed in activated or antigen-experienced T-cells that plays an important role in the immune response. Upon binding to its ligand ICOSL expressed on antigen presenting cells (APCs), delivers costimulatory signals that enhances all basic T-cell responses to a foreign antigen, namely proliferation, secretion of lymphokines including IL10, up-regulation of molecules that mediate cell-cell interaction, and effective help for antibody secretion by B-cells. Also acts as a costimulatory receptor critical for the differentiation of T follicular regulatory cells upon immune challenges such as viral infection. Mechanistically, potentiates TCR-induced calcium flux by augmenting PLCG1 activation and actin remodeling. In addition, activates PI3K signaling pathways independently of calcium flux. Essential both for efficient interaction between T and B-cells and for normal antibody responses to T-cell dependent antigens. Prevents the apoptosis of pre-activated T-cells. Plays a critical role in CD40-mediated class switching of immunoglobin isotypes. The sequence is that of Inducible T-cell costimulator (ICOS) from Bos taurus (Bovine).